A 362-amino-acid polypeptide reads, in one-letter code: tRNA/tmRNA (uracil-C(5))-methyltransferase (362 aa).

Residues glutamine 186, tyrosine 214, asparagine 219, glutamate 235, and aspartate 295 each coordinate S-adenosyl-L-methionine. Cysteine 320 (nucleophile) is an active-site residue. Glutamate 354 (proton acceptor) is an active-site residue.

This sequence belongs to the class I-like SAM-binding methyltransferase superfamily. RNA M5U methyltransferase family. TrmA subfamily.

The catalysed reaction is uridine(54) in tRNA + S-adenosyl-L-methionine = 5-methyluridine(54) in tRNA + S-adenosyl-L-homocysteine + H(+). It catalyses the reaction uridine(341) in tmRNA + S-adenosyl-L-methionine = 5-methyluridine(341) in tmRNA + S-adenosyl-L-homocysteine + H(+). In terms of biological role, dual-specificity methyltransferase that catalyzes the formation of 5-methyluridine at position 54 (m5U54) in all tRNAs, and that of position 341 (m5U341) in tmRNA (transfer-mRNA). The polypeptide is tRNA/tmRNA (uracil-C(5))-methyltransferase (Stutzerimonas stutzeri (strain A1501) (Pseudomonas stutzeri)).